The following is a 431-amino-acid chain: Glucose-1-phosphate adenylyltransferase (431 aa).

Residue lysine 39 coordinates beta-D-fructose 1,6-bisphosphate. 3 residues coordinate AMP: arginine 40, histidine 46, and arginine 52. Tyrosine 114 serves as a coordination point for alpha-D-glucose 1-phosphate. Arginine 130 contacts AMP. Alpha-D-glucose 1-phosphate is bound by residues glycine 179, 194-195 (EK), and serine 212. Glutamate 370 and arginine 386 together coordinate AMP. Beta-D-fructose 1,6-bisphosphate-binding positions include 419-423 (REMLR) and 429-431 (QER).

It belongs to the bacterial/plant glucose-1-phosphate adenylyltransferase family. In terms of assembly, homotetramer.

It carries out the reaction alpha-D-glucose 1-phosphate + ATP + H(+) = ADP-alpha-D-glucose + diphosphate. It participates in glycan biosynthesis; glycogen biosynthesis. With respect to regulation, allosterically activated by fructose-1,6-bisphosphate (F16BP) and inhibited by AMP. Involved in the biosynthesis of ADP-glucose, a building block required for the elongation reactions to produce glycogen. Catalyzes the reaction between ATP and alpha-D-glucose 1-phosphate (G1P) to produce pyrophosphate and ADP-Glc. The chain is Glucose-1-phosphate adenylyltransferase from Escherichia coli O7:K1 (strain IAI39 / ExPEC).